Reading from the N-terminus, the 2336-residue chain is Voltage-dependent N-type calcium channel subunit alpha-1B (2336 aa).

The tract at residues 1 to 37 (MVRFGDELGGRYGGTGGGERARGGGAGGAGGPGQGGL) is disordered. Residues 1-90 (MVRFGDELGG…DNVVRKYAKR (90 aa)) are Cytoplasmic-facing. Positions 10-37 (GRYGGTGGGERARGGGAGGAGGPGQGGL) are enriched in gly residues. R22 is modified (omega-N-methylarginine). One copy of the I repeat lies at 82-359 (NVVRKYAKRI…LVLGVLSGEF (278 aa)). The helical transmembrane segment at 91–114 (ITEWPPFEYMILATIIANCIVLAL) threads the bilayer. The Extracellular portion of the chain corresponds to 115–131 (EQHLPDGDKTPMSERLD). The chain crosses the membrane as a helical span at residues 132-152 (DTEPYFIGIFCFEAGIKIIAL). Topologically, residues 153–163 (GFVFHKGSYLR) are cytoplasmic. The helical transmembrane segment at 164 to 182 (NGWNVMDFVVVLTEILATA) threads the bilayer. The Extracellular segment spans residues 183–187 (GTDFD). The helical transmembrane segment at 188-211 (LRTLRAVRVLRPLKLVSGIPSLQV) threads the bilayer. The Cytoplasmic portion of the chain corresponds to 212–221 (VLKSIMKAMV). The helical transmembrane segment at 222 to 244 (PLLQIGLLLFFAILMFAIIGLEF) threads the bilayer. Residues 245 to 331 (YMGKFHKACF…NTNDAAGNTW (87 aa)) are Extracellular-facing. A glycan (N-linked (GlcNAc...) asparagine) is linked at N256. The chain crosses the membrane as a helical span at residues 332–356 (NWLYFIPLIIIGSFFMLNLVLGVLS). At 357 to 483 (GEFAKERERV…FLIRRMVKAQ (127 aa)) the chain is on the cytoplasmic side. The tract at residues 379 to 396 (QQIERELNGYLEWIFKAE) is binding to the beta subunit. S411 bears the Phosphoserine mark. 452–459 (ASLKSGKT) contacts ATP. One copy of the II repeat lies at 469–713 (EKMFRFLIRR…VFLAIAVDNL (245 aa)). A helical membrane pass occupies residues 484 to 502 (SFYWVVLCVVALNTLCVAM). The Extracellular segment spans residues 503 to 512 (VHYNQPQRLT). A helical membrane pass occupies residues 513–535 (TALYFAEFVFLGLFLTEMSLKMY). At 536-545 (GLGPRSYFRS) the chain is on the cytoplasmic side. S545 is an a 1,2-diacyl-sn-glycero-3-phospho-(1D-myo-inositol-4,5-bisphosphate) binding site. A helical transmembrane segment spans residues 546-567 (SFNCFDFGVIVGSIFEVVWAAI). The Extracellular segment spans residues 568-574 (KPGTSFG). The helical transmembrane segment at 575–587 (ISVLRALRLLRIF) threads the bilayer. A 1,2-diacyl-sn-glycero-3-phospho-(1D-myo-inositol-4,5-bisphosphate) is bound by residues R585 and K588. The Cytoplasmic portion of the chain corresponds to 588–605 (KVTKYWNSLRNLVVSLLN). A helical transmembrane segment spans residues 606–631 (SMKSIISLLFLLFLFIVVFALLGMQL). The Extracellular portion of the chain corresponds to 632-683 (FGGQFNFQDETPTTNFDTFPAAILTVFQILTGEDWNAVMYHGIESQGGVSKG). Residues 684 to 710 (MFSSFYFIVLTLFGNYTLLNVFLAIAV) form a helical membrane-spanning segment. The Cytoplasmic segment spans residues 711–1149 (DNLANAQELT…FCHYIVTMRY (439 aa)). 3 positions are modified to phosphoserine: S746, S749, and S784. 2 disordered regions span residues 800-1021 (YAST…HQPK) and 1051-1076 (EQPE…STTV). Basic and acidic residues-rich tracts occupy residues 806–827 (VRPD…RDGL), 870–891 (EQDR…EERA), 920–930 (GSPEEATEREP), 938–948 (HAQDSSKEGKE), 970–981 (GPRETENSEEPT), and 996–1021 (PPER…HQPK). Residues 1059–1076 (QRNVTRMGSQPSDPSTTV) are compositionally biased toward polar residues. S1067 is modified (phosphoserine). The stretch at 1135–1421 (NLLRRFCHYI…IFVALIIITF (287 aa)) is one III repeat. A helical transmembrane segment spans residues 1150–1168 (FEMVILVVIALSSIALAAE). Topologically, residues 1169 to 1176 (DPVRTDSF) are extracellular. The helical transmembrane segment at 1177–1201 (RNNALKYMDYIFTGVFTFEMVIKMI) threads the bilayer. Residues 1202–1215 (DLGLLLHPGAYFRD) are Cytoplasmic-facing. A helical transmembrane segment spans residues 1216-1240 (LWNILDFIVVSGALVAFAFSSFMGG). Topologically, residues 1241–1246 (SKGKDI) are extracellular. A helical transmembrane segment spans residues 1247–1267 (NTIKSLRVLRVLRPLKTIKRL). Topologically, residues 1268–1285 (PKLKAVFDCVVNSLKNVL) are cytoplasmic. Residues 1286-1305 (NILIVYMLFMFIFAVIAVQL) form a helical membrane-spanning segment. Residues 1306–1392 (FKGKFFYCTD…EQGPSPGFRM (87 aa)) lie on the Extracellular side of the membrane. The chain crosses the membrane as a helical span at residues 1393–1418 (ELSIFYVVYFVVFPFFFVNIFVALII). The Cytoplasmic portion of the chain corresponds to 1419 to 1473 (ITFQEQGDKVMSECSLEKNERACIDFAISAKPLTRYMPQNKQSFQYKTWTFVVSP). Residues 1458–1711 (NKQSFQYKTW…LFVAVIMDNF (254 aa)) form an IV repeat. Residues 1474–1492 (PFEYFIMAMIALNTVVLMM) form a helical membrane-spanning segment. Residues 1493–1500 (KFYDAPYE) lie on the Extracellular side of the membrane. Residues 1501–1525 (YELMLKCLNIVFTSMFSLECILKII) form a helical membrane-spanning segment. The Cytoplasmic portion of the chain corresponds to 1526 to 1535 (AFGVLNYFRD). Residues 1536–1557 (AWNVFDFVTVLGSITDILVTEI) traverse the membrane as a helical segment. The Extracellular segment spans residues 1558-1563 (ANNFIN). N1563 carries N-linked (GlcNAc...) asparagine glycosylation. A helical membrane pass occupies residues 1564–1582 (LSFLRLFRAARLIKLCRQG). At 1583–1601 (YTIRILLWTFVQSFKALPY) the chain is on the cytoplasmic side. The chain crosses the membrane as a helical span at residues 1602–1621 (VCLLIAMLFFIYAIIGMQVF). The Extracellular segment spans residues 1622–1683 (GNIALDDGTS…ANASECGSDF (62 aa)). N1675 is a glycosylation site (N-linked (GlcNAc...) asparagine). Residues 1684-1707 (AYFYFVSFIFLCSFLMLNLFVAVI) traverse the membrane as a helical segment. The Cytoplasmic segment spans residues 1708–2336 (MDNFEYLTRD…YHHPDQDHWC (629 aa)). The EF-hand domain maps to 1724 to 1759 (HHLDEFIRVWAEYDPAACGRISYNDMFEMLKHMSPP). Positions 1737, 1743, and 1748 each coordinate Ca(2+). The segment at 1981–2202 (TLRGPDGEPQ…TPRPSITYKT (222 aa)) is disordered. Over residues 2048-2062 (SHHHHHRCHRRRDKK) the composition is skewed to basic residues. Position 2065 is a phosphoserine (S2065). Residues 2097 to 2113 (CRRERKQERGRSQERRQ) are compositionally biased toward basic and acidic residues. Residues 2161–2177 (GSGSVNGSPLMSTSGAS) show a composition bias toward polar residues. A phosphoserine mark is found at S2221, S2230, and S2253.

This sequence belongs to the calcium channel alpha-1 subunit (TC 1.A.1.11) family. CACNA1B subfamily. As to quaternary structure, multisubunit complex consisting of alpha-1, alpha-2, beta and delta subunits in a 1:1:1:1 ratio. The channel activity is directed by the pore-forming and voltage-sensitive alpha-1 subunit. In many cases, this subunit is sufficient to generate voltage-sensitive calcium channel activity. The auxiliary subunits beta and alpha-2/delta linked by a disulfide bridge regulate the channel activity. Interacts with RIMS1. Interacts with FMR1 (via C-terminus); this interaction induces a decrease in the number of presynaptic functional CACNA1B channels at the cell surface. In terms of processing, phosphorylated in vitro by CaM-kinase II, PKA, PKC and CGPK. In terms of tissue distribution, central nervous system.

Its subcellular location is the membrane. The enzyme catalyses Ca(2+)(in) = Ca(2+)(out). Is specifically blocked by omega-conotoxin GVIA. Is specifically blocked by omega-conotoxin MVIIA (ziconotide). Is insensitive to dihydropyridines (DHP). Functionally, voltage-sensitive calcium channels (VSCC) mediate the entry of calcium ions into excitable cells and are also involved in a variety of calcium-dependent processes, including muscle contraction, hormone or neurotransmitter release, gene expression, cell motility, cell division and cell death. This alpha-1B subunit gives rise to N-type calcium currents. N-type calcium channels belong to the 'high-voltage activated' (HVA) group. They are involved in pain signaling. Calcium channels containing alpha-1B subunit may play a role in directed migration of immature neurons. Mediates Ca(2+) release probability at hippocampal neuronal soma and synaptic terminals. This is Voltage-dependent N-type calcium channel subunit alpha-1B (Cacna1b) from Rattus norvegicus (Rat).